Consider the following 150-residue polypeptide: Large ribosomal subunit protein bL9 (150 aa).

Belongs to the bacterial ribosomal protein bL9 family.

In terms of biological role, binds to the 23S rRNA. This Streptococcus mutans serotype c (strain ATCC 700610 / UA159) protein is Large ribosomal subunit protein bL9.